Consider the following 346-residue polypeptide: Phosphoribosylformylglycinamidine cyclo-ligase (346 aa).

This sequence belongs to the AIR synthase family.

The protein localises to the cytoplasm. It carries out the reaction 2-formamido-N(1)-(5-O-phospho-beta-D-ribosyl)acetamidine + ATP = 5-amino-1-(5-phospho-beta-D-ribosyl)imidazole + ADP + phosphate + H(+). It functions in the pathway purine metabolism; IMP biosynthesis via de novo pathway; 5-amino-1-(5-phospho-D-ribosyl)imidazole from N(2)-formyl-N(1)-(5-phospho-D-ribosyl)glycinamide: step 2/2. This is Phosphoribosylformylglycinamidine cyclo-ligase from Bacillus velezensis (strain DSM 23117 / BGSC 10A6 / LMG 26770 / FZB42) (Bacillus amyloliquefaciens subsp. plantarum).